A 101-amino-acid chain; its full sequence is NADH-ubiquinone oxidoreductase chain 4L (101 aa).

The next 3 membrane-spanning stretches (helical) occupy residues 5-25 (LNCTNISSLLFLVSLLGIFLN), 29-49 (ILVMLMSLEMMFLSISFNLIF), and 64-84 (LLILTVAAAESSIGLAILVIY).

It belongs to the complex I subunit 4L family.

It is found in the mitochondrion membrane. It carries out the reaction a ubiquinone + NADH + 5 H(+)(in) = a ubiquinol + NAD(+) + 4 H(+)(out). Its function is as follows. Core subunit of the mitochondrial membrane respiratory chain NADH dehydrogenase (Complex I) that is believed to belong to the minimal assembly required for catalysis. Complex I functions in the transfer of electrons from NADH to the respiratory chain. The immediate electron acceptor for the enzyme is believed to be ubiquinone. This chain is NADH-ubiquinone oxidoreductase chain 4L (ND4L), found in Chondrus crispus (Carrageen Irish moss).